The primary structure comprises 316 residues: tRNA dimethylallyltransferase (316 aa).

17–24 provides a ligand contact to ATP; it reads GPTASGKT. Residue 19–24 participates in substrate binding; it reads TASGKT. Interaction with substrate tRNA regions lie at residues 42–45, 166–170, 247–252, and 280–287; these read DSAL, QRLSR, RCVGYR, and KRQITWLR.

The protein belongs to the IPP transferase family. As to quaternary structure, monomer. Mg(2+) serves as cofactor.

It catalyses the reaction adenosine(37) in tRNA + dimethylallyl diphosphate = N(6)-dimethylallyladenosine(37) in tRNA + diphosphate. Catalyzes the transfer of a dimethylallyl group onto the adenine at position 37 in tRNAs that read codons beginning with uridine, leading to the formation of N6-(dimethylallyl)adenosine (i(6)A). The protein is tRNA dimethylallyltransferase of Escherichia fergusonii (strain ATCC 35469 / DSM 13698 / CCUG 18766 / IAM 14443 / JCM 21226 / LMG 7866 / NBRC 102419 / NCTC 12128 / CDC 0568-73).